Consider the following 522-residue polypeptide: Nif-specific regulatory protein (522 aa).

An a domain region spans residues 1-184; the sequence is MNATIPQRSA…AQTVRLVVNI (184 aa). The 142-residue stretch at 37-178 folds into the GAF domain; sequence QIDELLEQVL…IVANLLAQTV (142 aa). A Sigma-54 factor interaction domain is found at 211–439; the sequence is VVGHTPTMRR…LENCLERSAI (229 aa). Residues 239–246 and 302–311 contribute to the ATP site; these read GESGTGKE and ADGGTLFLDE. The interval 440–479 is inter-domain linker; the sequence is MSEDGTITRDVVSLTGVDNESPPLAAPLPEVNLADETLDD. The segment at 480-522 is C-terminal DNA-binding domain; it reads RERVIAALEQAGWVQAKAARLLGMTPRQIAYRIQTLNIHMRKI. The segment at residues 494–513 is a DNA-binding region (H-T-H motif); it reads QAKAARLLGMTPRQIAYRIQ.

In terms of assembly, interacts with sigma-54.

In terms of biological role, required for activation of most nif operons, which are directly involved in nitrogen fixation. The sequence is that of Nif-specific regulatory protein (nifA) from Azotobacter vinelandii.